The following is a 178-amino-acid chain: Protein GrpE (178 aa).

Residues 1-22 (MSENQNPSPSPEEIEAAMSANA) are disordered.

This sequence belongs to the GrpE family. As to quaternary structure, homodimer.

It localises to the cytoplasm. Functionally, participates actively in the response to hyperosmotic and heat shock by preventing the aggregation of stress-denatured proteins, in association with DnaK and GrpE. It is the nucleotide exchange factor for DnaK and may function as a thermosensor. Unfolded proteins bind initially to DnaJ; upon interaction with the DnaJ-bound protein, DnaK hydrolyzes its bound ATP, resulting in the formation of a stable complex. GrpE releases ADP from DnaK; ATP binding to DnaK triggers the release of the substrate protein, thus completing the reaction cycle. Several rounds of ATP-dependent interactions between DnaJ, DnaK and GrpE are required for fully efficient folding. The protein is Protein GrpE of Acidovorax ebreus (strain TPSY) (Diaphorobacter sp. (strain TPSY)).